The following is a 416-amino-acid chain: Probable glucan 1,3-beta-glucosidase A (416 aa).

A signal peptide spans 1 to 22; it reads MIFKFSQKALVALYLVVGLAEA. The active-site Proton donor is E211. 2 disulfide bridges follow: C291–C415 and C316–C342. E308 serves as the catalytic Nucleophile. A glycan (N-linked (GlcNAc...) asparagine) is linked at N344.

The protein belongs to the glycosyl hydrolase 5 (cellulase A) family. In terms of assembly, monomer. Requires Mn(2+) as cofactor.

The protein resides in the secreted. It catalyses the reaction Successive hydrolysis of beta-D-glucose units from the non-reducing ends of (1-&gt;3)-beta-D-glucans, releasing alpha-glucose.. Its function is as follows. Beta-glucanases participate in the metabolism of beta-glucan, the main structural component of the cell wall. It could also function biosynthetically as a transglycosylase. The chain is Probable glucan 1,3-beta-glucosidase A (exgA) from Aspergillus fumigatus (strain ATCC MYA-4609 / CBS 101355 / FGSC A1100 / Af293) (Neosartorya fumigata).